The sequence spans 405 residues: Glycosylated lysosomal membrane protein A (405 aa).

The first 25 residues, 1–25, serve as a signal peptide directing secretion; it reads MGCTRGWRLLLLLGLVCVGALQGRG. Residues 26 to 365 lie on the Lumenal side of the membrane; sequence QEESREVSLQ…YGEPPRDSFS (340 aa). Asn-55, Asn-86, Asn-125, Asn-129, Asn-143, Asn-153, Asn-157, Asn-164, Asn-169, Asn-179, Asn-206, Asn-222, Asn-267, Asn-304, and Asn-331 each carry an N-linked (GlcNAc...) asparagine glycan. The chain crosses the membrane as a helical span at residues 366-386; sequence ILVICIMAVALGTPLLLLIVG. The Cytoplasmic portion of the chain corresponds to 387–405; that stretch reads TLVVTALRHKVYSNYEPIN. A Lysosomal targeting motif motif is present at residues 401–405; it reads YEPIN.

This sequence belongs to the GLMP family. Interacts (via lumenal domain) with lysosomal protein MFSD1; the interaction starts while both proteins are still in the endoplasmic reticulum and is required for stabilization of MFSD1 in lysosomes but has no direct effect on its targeting to lysosomes or transporter activity.

Its subcellular location is the lysosome membrane. Required to protect lysosomal transporter MFSD1 from lysosomal proteolysis and for MFSD1 lysosomal localization. The sequence is that of Glycosylated lysosomal membrane protein A (glmp-a) from Xenopus laevis (African clawed frog).